The chain runs to 227 residues: ATP-dependent dethiobiotin synthetase BioD (227 aa).

13 to 18 (DIGKTY) provides a ligand contact to ATP. Thr-17 serves as a coordination point for Mg(2+). The active site involves Lys-38. Ser-42 is a binding site for substrate. ATP is bound by residues Asp-55, 116-119 (EGSG), and 179-180 (NN). 2 residues coordinate Mg(2+): Asp-55 and Glu-116.

The protein belongs to the dethiobiotin synthetase family. Homodimer. The cofactor is Mg(2+).

It localises to the cytoplasm. It catalyses the reaction (7R,8S)-7,8-diammoniononanoate + CO2 + ATP = (4R,5S)-dethiobiotin + ADP + phosphate + 3 H(+). The protein operates within cofactor biosynthesis; biotin biosynthesis; biotin from 7,8-diaminononanoate: step 1/2. Functionally, catalyzes a mechanistically unusual reaction, the ATP-dependent insertion of CO2 between the N7 and N8 nitrogen atoms of 7,8-diaminopelargonic acid (DAPA, also called 7,8-diammoniononanoate) to form a ureido ring. The protein is ATP-dependent dethiobiotin synthetase BioD of Clostridium botulinum (strain Kyoto / Type A2).